Reading from the N-terminus, the 354-residue chain is GRAM domain-containing protein 2A (354 aa).

A compositionally biased stretch (polar residues) spans 1–29 (MTALSRSEATEEGGNQQMHRKTASLNSPV). The tract at residues 1–46 (MTALSRSEATEEGGNQQMHRKTASLNSPVSCKEKPDRVEEPPDYSL) is disordered. The segment covering 31–40 (CKEKPDRVEE) has biased composition (basic and acidic residues). The GRAM domain maps to 72–139 (QQYHKLFKDV…VSVQMIKKHK (68 aa)). A helical membrane pass occupies residues 312 to 332 (LLKVFFVLICFLVMSSSYLAF).

It is found in the endoplasmic reticulum membrane. The protein resides in the cell membrane. Participates in the organization of endoplasmic reticulum-plasma membrane contact sites (EPCS) with pleiotropic functions including STIM1 recruitment and calcium homeostasis. Constitutive tether that co-localize with ESYT2/3 tethers at endoplasmic reticulum-plasma membrane contact sites in a phosphatidylinositol lipid-dependent manner. Pre-marks the subset of phosphtidylinositol 4,5-biphosphate (PI(4,5)P2)-enriched EPCS destined for the store operated calcium entry pathway (SOCE). This chain is GRAM domain-containing protein 2A, found in Homo sapiens (Human).